Consider the following 361-residue polypeptide: MGKVHRPRRGSLAFSPRKRAKSIVPRIRSWPKETEVRMLGFAGYKAGMTHILMIDDEPGLTNGKEIFMPVTIIETPPLRVFGIRAYRQGYLGLETATEVIVPDFELDNYVSKKAKGRKFTFYQLLKRRIATLPKNYTKDDFEQKLGNLEDMIKEGEIVEVRALVATQPWVIKLKKKPEVMEYAIGGTSVEEKFNYIKEKLGKELRVGEVLKEGELLDVIAVTKGKGTQGPVKRWGIKLRAHKDSKGRRKVGSIGPWHPARVMWTVPMAGQMGFHHRTELNKRLIAIGENGKLVIDGNEIEITPKGGFPHYGIVRSDFMMIAGSVPGAIKRIIRVRPAIRPPKKKPPVQRPQITYVSVESKQ.

Residues 339–361 (RPPKKKPPVQRPQITYVSVESKQ) form a disordered region. Residues 350-361 (PQITYVSVESKQ) are compositionally biased toward polar residues.

This sequence belongs to the universal ribosomal protein uL3 family. In terms of assembly, part of the 50S ribosomal subunit. Forms a cluster with proteins L14 and L24e.

One of the primary rRNA binding proteins, it binds directly near the 3'-end of the 23S rRNA, where it nucleates assembly of the 50S subunit. This is Large ribosomal subunit protein uL3 from Pyrococcus abyssi (strain GE5 / Orsay).